The following is an 89-amino-acid chain: Small ribosomal subunit protein uS15 (89 aa).

The protein belongs to the universal ribosomal protein uS15 family. In terms of assembly, part of the 30S ribosomal subunit. Forms a bridge to the 50S subunit in the 70S ribosome, contacting the 23S rRNA.

Functionally, one of the primary rRNA binding proteins, it binds directly to 16S rRNA where it helps nucleate assembly of the platform of the 30S subunit by binding and bridging several RNA helices of the 16S rRNA. In terms of biological role, forms an intersubunit bridge (bridge B4) with the 23S rRNA of the 50S subunit in the ribosome. This is Small ribosomal subunit protein uS15 from Saccharopolyspora erythraea (strain ATCC 11635 / DSM 40517 / JCM 4748 / NBRC 13426 / NCIMB 8594 / NRRL 2338).